A 63-amino-acid chain; its full sequence is U-reduvitoxin-Pr4a (63 aa).

The first 19 residues, 1–19, serve as a signal peptide directing secretion; it reads MKIFGLFLLIATYMALAFA. Intrachain disulfides connect Cys-24-Cys-40, Cys-31-Cys-45, and Cys-39-Cys-52.

Belongs to the venom Ptu1-like knottin family. In terms of tissue distribution, expressed by the venom gland.

It localises to the secreted. In terms of biological role, binds reversibly and blocks P/Q-type voltage-gated calcium channels (Cav). In Platymeris rhadamanthus (Red spot assassin bug), this protein is U-reduvitoxin-Pr4a.